We begin with the raw amino-acid sequence, 186 residues long: Ion-translocating oxidoreductase complex subunit B (186 aa).

The segment at 1-23 (MLTPILALTALALIAGALLGFAA) is hydrophobic. One can recognise a 4Fe-4S domain in the interval 29 to 88 (EGNPIADQVDAVLPQTQCGQCGFGGCRPYAEAIAAGEAEINRCPPGGQDTVQTLADLLGV). Positions 46, 49, 54, 71, 114, 117, 120, 124, 144, 147, 150, and 154 each coordinate [4Fe-4S] cluster. 4Fe-4S ferredoxin-type domains are found at residues 105–134 (QVAWVDEAVCIGCTRCIQACPVDAILGAAK) and 135–164 (QMHTVLKGECTGCGLCVDPCPVDCIHMVPV).

The protein belongs to the 4Fe4S bacterial-type ferredoxin family. RnfB subfamily. In terms of assembly, the complex is composed of six subunits: RnfA, RnfB, RnfC, RnfD, RnfE and RnfG. The cofactor is [4Fe-4S] cluster.

The protein resides in the cell inner membrane. Functionally, part of a membrane-bound complex that couples electron transfer with translocation of ions across the membrane. The sequence is that of Ion-translocating oxidoreductase complex subunit B from Alkalilimnicola ehrlichii (strain ATCC BAA-1101 / DSM 17681 / MLHE-1).